The sequence spans 261 residues: Short chain dehydrogenase/reductase astE (261 aa).

4 residues coordinate NADP(+): Ile24, Asp70, Asn97, and Lys131. Residues Ser150 and Tyr164 each act as proton donor in the active site. 4 residues coordinate NADP(+): Tyr164, Lys168, Val197, and Thr199. Lys168 serves as the catalytic Lowers pKa of active site Tyr.

Belongs to the short-chain dehydrogenases/reductases (SDR) family.

It functions in the pathway secondary metabolite biosynthesis; terpenoid biosynthesis. Short chain dehydrogenase/reductase; part of the gene cluster that mediates the biosynthesis of astellolides, drimane-type sesquiterpene esters that show antimicrobial, anti-inflammatory, and anti-tumor activities. The first step in astellolide biosynthesis is performed by the sesquiterpene cyclase astC that catalyzes the formation of drimanyl pyrophosphate from farnesyl pyrophosphate. Drimanyl pyrophosphate is then dephosphorylated by the sesquiterpene phosphatase astI to produce drimanyl monophosphate which is further dephosphorylated to drim-8-ene-11-ol by atsK. Drim-8-ene-11-ol is converted to confertifolin, probably by the cytochrome P450 monooxygenase astD and/or the dehydrogenase astE. The cytochrome P450 monooxygenases astB, astF and astJ then hydroxylate confertifolin at C6, C14, or C15 to form trihydroxy confertifolin. The nonribosomal peptide synthetase astA catalyzes ester bond formation between trihydroxy contifolin and benzoic acid (BA) or 4-hydroxy benzoic acid (4HBA), leading to the formation of dideacetyl astellolides A and B, respectively. Finally, the O-acetyltransferase astG converts dideacetyl astellolides A and B into deacetyl astellolides A and B. This is Short chain dehydrogenase/reductase astE from Aspergillus oryzae (strain ATCC 42149 / RIB 40) (Yellow koji mold).